The chain runs to 488 residues: E3 ubiquitin-protein ligase TRIM39 (488 aa).

Residues 29-70 form an RING-type zinc finger; sequence CSVCLEYLKEPVIIECGHNFCKACITRWWEDLERDFPCPVCR. The B box-type zinc-finger motif lies at 102–143; the sequence is RDESLCSQHHEPLSLFCYEDQEAVCLICAISHTHRPHTVVPM. The Zn(2+) site is built by cysteine 107, histidine 110, cysteine 129, and histidine 135. A coiled-coil region spans residues 181–250; it reads ELKRLVESRR…AHLAAEVEGK (70 aa). 2 interaction with CDKN1A regions span residues 268 to 307 and 359 to 488; these read KCEK…QLIA and TSGR…TDWE. The region spanning 289–484 is the B30.2/SPRY domain; that stretch reads SNFPRQYFAL…NAAPLTIRPP (196 aa).

Belongs to the TRIM/RBCC family. Interacts with MOAP1. Interacts with CDKN1A. Autoubiquitinated.

The protein resides in the cytoplasm. It is found in the cytosol. It localises to the mitochondrion. The protein localises to the nucleus. It carries out the reaction S-ubiquitinyl-[E2 ubiquitin-conjugating enzyme]-L-cysteine + [acceptor protein]-L-lysine = [E2 ubiquitin-conjugating enzyme]-L-cysteine + N(6)-ubiquitinyl-[acceptor protein]-L-lysine.. Its pathway is protein modification; protein ubiquitination. Functionally, E3 ubiquitin-protein ligase. May facilitate apoptosis by inhibiting APC/C-Cdh1-mediated poly-ubiquitination and subsequent proteasome-mediated degradation of the pro-apoptotic protein MOAP1. Regulates the G1/S transition of the cell cycle and DNA damage-induced G2 arrest by stabilizing CDKN1A/p21. Positively regulates CDKN1A/p21 stability by competing with DTL for CDKN1A/p21 binding, therefore disrupting DCX(DTL) E3 ubiquitin ligase complex-mediated CDKN1A/p21 ubiquitination and degradation. The protein is E3 ubiquitin-protein ligase TRIM39 (Trim39) of Mus musculus (Mouse).